The primary structure comprises 256 residues: Small ribosomal subunit protein uS2 (256 aa).

A coiled-coil region spans residues 104-149; that stretch reads NFKTISQRVHRLEELEALFASPEIEERPKKEQVRLKHELERLQKYL.

This sequence belongs to the universal ribosomal protein uS2 family. Part of the 30S ribosomal subunit. Contacts protein S8.

Its function is as follows. Spans the head-body hinge region of the 30S subunit. Is loosely associated with the 30S subunit. This Thermus thermophilus (strain ATCC BAA-163 / DSM 7039 / HB27) protein is Small ribosomal subunit protein uS2 (rpsB).